A 145-amino-acid polypeptide reads, in one-letter code: Small ribosomal subunit protein uS9 (145 aa).

This sequence belongs to the universal ribosomal protein uS9 family.

Its subcellular location is the cytoplasm. This chain is Small ribosomal subunit protein uS9 (RPS16), found in Gossypium hirsutum (Upland cotton).